The chain runs to 450 residues: uncharacterized protein (450 aa).

A TRAM domain is found at 1–58 (MAKGEIVTVKIEEMDFKGYGVGYCEGKPLKVRGGILGQRVAVRVKKGKKGRAEGEIVE). [4Fe-4S] cluster-binding residues include cysteine 71, cysteine 77, cysteine 80, and cysteine 159. Residues glutamine 285, tyrosine 314, glutamate 335, and aspartate 380 each contribute to the S-adenosyl-L-methionine site. Cysteine 407 functions as the Nucleophile in the catalytic mechanism.

This sequence belongs to the class I-like SAM-binding methyltransferase superfamily. RNA M5U methyltransferase family.

This is an uncharacterized protein from Caldanaerobacter subterraneus subsp. tengcongensis (strain DSM 15242 / JCM 11007 / NBRC 100824 / MB4) (Thermoanaerobacter tengcongensis).